The chain runs to 158 residues: SsrA-binding protein (158 aa).

Residues 131 to 158 (GKKTHDKRETEKKRDWNREKARLLRDRG) form a disordered region. Basic and acidic residues predominate over residues 136-158 (DKRETEKKRDWNREKARLLRDRG).

It belongs to the SmpB family.

The protein localises to the cytoplasm. In terms of biological role, required for rescue of stalled ribosomes mediated by trans-translation. Binds to transfer-messenger RNA (tmRNA), required for stable association of tmRNA with ribosomes. tmRNA and SmpB together mimic tRNA shape, replacing the anticodon stem-loop with SmpB. tmRNA is encoded by the ssrA gene; the 2 termini fold to resemble tRNA(Ala) and it encodes a 'tag peptide', a short internal open reading frame. During trans-translation Ala-aminoacylated tmRNA acts like a tRNA, entering the A-site of stalled ribosomes, displacing the stalled mRNA. The ribosome then switches to translate the ORF on the tmRNA; the nascent peptide is terminated with the 'tag peptide' encoded by the tmRNA and targeted for degradation. The ribosome is freed to recommence translation, which seems to be the essential function of trans-translation. This chain is SsrA-binding protein, found in Brucella ovis (strain ATCC 25840 / 63/290 / NCTC 10512).